The following is a 37-amino-acid chain: Cytochrome b6-f complex subunit 7 (37 aa).

The chain crosses the membrane as a helical span at residues Ala11–Leu29.

This sequence belongs to the PetM family. As to quaternary structure, the 4 large subunits of the cytochrome b6-f complex are cytochrome b6, subunit IV (17 kDa polypeptide, PetD), cytochrome f and the Rieske protein, while the 4 small subunits are PetG, PetL, PetM and PetN. The complex functions as a dimer.

The protein localises to the cellular thylakoid membrane. In terms of biological role, component of the cytochrome b6-f complex, which mediates electron transfer between photosystem II (PSII) and photosystem I (PSI), cyclic electron flow around PSI, and state transitions. The polypeptide is Cytochrome b6-f complex subunit 7 (Crocosphaera subtropica (strain ATCC 51142 / BH68) (Cyanothece sp. (strain ATCC 51142))).